We begin with the raw amino-acid sequence, 429 residues long: Adenylosuccinate synthetase (429 aa).

Residues 12–18 and 40–42 contribute to the GTP site; these read GDEGKGK and GHT. Asp13 serves as the catalytic Proton acceptor. Mg(2+)-binding residues include Asp13 and Gly40. IMP is bound by residues 13-16, 38-41, Thr129, Arg143, Gln224, Thr239, and Arg303; these read DEGK and NAGH. Residue His41 is the Proton donor of the active site. 299–305 lines the substrate pocket; sequence ATTGRRR. Residues Arg305, 331–333, and 413–415 contribute to the GTP site; these read KLD and SVG.

The protein belongs to the adenylosuccinate synthetase family. In terms of assembly, homodimer. Requires Mg(2+) as cofactor.

The protein localises to the cytoplasm. It catalyses the reaction IMP + L-aspartate + GTP = N(6)-(1,2-dicarboxyethyl)-AMP + GDP + phosphate + 2 H(+). Its pathway is purine metabolism; AMP biosynthesis via de novo pathway; AMP from IMP: step 1/2. Its function is as follows. Plays an important role in the de novo pathway of purine nucleotide biosynthesis. Catalyzes the first committed step in the biosynthesis of AMP from IMP. This Desulforapulum autotrophicum (strain ATCC 43914 / DSM 3382 / VKM B-1955 / HRM2) (Desulfobacterium autotrophicum) protein is Adenylosuccinate synthetase.